The chain runs to 152 residues: Transcriptional regulator MraZ (152 aa).

SpoVT-AbrB domains lie at 5–52 (ATLV…PLPE) and 81–124 (ASEC…DETT).

This sequence belongs to the MraZ family. As to quaternary structure, forms oligomers.

It localises to the cytoplasm. The protein localises to the nucleoid. In terms of biological role, negatively regulates its own expression and that of the subsequent genes in the proximal part of the division and cell wall (dcw) gene cluster. Acts by binding directly to DNA. May also regulate the expression of genes outside the dcw cluster. The sequence is that of Transcriptional regulator MraZ from Shigella sonnei (strain Ss046).